The following is a 465-amino-acid chain: Cysteine--tRNA ligase (465 aa).

Position 30 (Cys30) interacts with Zn(2+). The 'HIGH' region signature appears at 32–42 (ITVYDYCHVGH). Zn(2+)-binding residues include Cys214, His239, and Glu243. The short motif at 271-275 (KMSKS) is the 'KMSKS' region element. Lys274 provides a ligand contact to ATP.

Belongs to the class-I aminoacyl-tRNA synthetase family. Monomer. Zn(2+) serves as cofactor.

The protein localises to the cytoplasm. It carries out the reaction tRNA(Cys) + L-cysteine + ATP = L-cysteinyl-tRNA(Cys) + AMP + diphosphate. The protein is Cysteine--tRNA ligase of Burkholderia ambifaria (strain MC40-6).